Reading from the N-terminus, the 640-residue chain is Paramyosin, short form (640 aa).

Nonhelical region stretches follow at residues 1–122 (MALA…PDTV) and 420–640 (KLEQ…TITE). Positions 123 to 619 (VERSRQRRRR…IIRAKHRTFV (497 aa)) form a coiled coil.

Belongs to the paramyosin family. Phosphorylated. In terms of tissue distribution, found in all adult muscle tissues except in indirect flight muscles and a set of temporary abdominal muscles. Not detected in larval muscle.

The protein localises to the cytoplasm. It localises to the myofibril. Its function is as follows. Paramyosin is a major structural component of many thick filaments isolated from invertebrate muscles. This is Paramyosin, short form (Prm) from Drosophila melanogaster (Fruit fly).